Reading from the N-terminus, the 151-residue chain is Prefoldin subunit alpha (151 aa).

The protein belongs to the prefoldin subunit alpha family. In terms of assembly, heterohexamer of two alpha and four beta subunits.

Its subcellular location is the cytoplasm. Functionally, molecular chaperone capable of stabilizing a range of proteins. Seems to fulfill an ATP-independent, HSP70-like function in archaeal de novo protein folding. This chain is Prefoldin subunit alpha, found in Sulfurisphaera tokodaii (strain DSM 16993 / JCM 10545 / NBRC 100140 / 7) (Sulfolobus tokodaii).